The following is a 397-amino-acid chain: Formate-dependent phosphoribosylglycinamide formyltransferase (397 aa).

Residues 21–22 and Glu81 each bind N(1)-(5-phospho-beta-D-ribosyl)glycinamide; that span reads EL. ATP-binding positions include Arg113, Lys154, 194 to 197, and Glu202; that span reads EEFV. The ATP-grasp domain occupies 118–312; sequence RFAAEKLKLP…EFQIHVRSAI (195 aa). Mg(2+) contacts are provided by Glu271 and Glu283. N(1)-(5-phospho-beta-D-ribosyl)glycinamide-binding positions include Asp290, Lys361, and 368–369; that span reads RR.

Belongs to the PurK/PurT family. As to quaternary structure, homodimer.

It carries out the reaction N(1)-(5-phospho-beta-D-ribosyl)glycinamide + formate + ATP = N(2)-formyl-N(1)-(5-phospho-beta-D-ribosyl)glycinamide + ADP + phosphate + H(+). It participates in purine metabolism; IMP biosynthesis via de novo pathway; N(2)-formyl-N(1)-(5-phospho-D-ribosyl)glycinamide from N(1)-(5-phospho-D-ribosyl)glycinamide (formate route): step 1/1. Its function is as follows. Involved in the de novo purine biosynthesis. Catalyzes the transfer of formate to 5-phospho-ribosyl-glycinamide (GAR), producing 5-phospho-ribosyl-N-formylglycinamide (FGAR). Formate is provided by PurU via hydrolysis of 10-formyl-tetrahydrofolate. The chain is Formate-dependent phosphoribosylglycinamide formyltransferase from Saccharolobus solfataricus (strain ATCC 35092 / DSM 1617 / JCM 11322 / P2) (Sulfolobus solfataricus).